A 1218-amino-acid polypeptide reads, in one-letter code: Structural maintenance of chromosomes protein 2 (1218 aa).

32–39 (GLNGSGKS) contacts ATP. Residues 209-517 (VKLKKEKEEY…INSVKIDYKI (309 aa)) adopt a coiled-coil conformation. The region spanning 525-654 (DVLGQIYKLI…CSNVDLCKKI (130 aa)) is the SMC hinge domain. Coiled-coil stretches lie at residues 693 to 949 (LNYE…DTVK) and 978 to 1045 (RHDV…KKSE).

The protein belongs to the SMC family. SMC2 subfamily.

The protein resides in the nucleus. May play a role in the conversion of interphase chromatin into condensed chromosomes. The sequence is that of Structural maintenance of chromosomes protein 2 from Plasmodium falciparum (isolate 3D7).